The sequence spans 549 residues: MELALALSLIASVAAAPTATLANGDTITGLNAIINEAFLGIPFAEPPVGNLRFKDPVPYSGSLDGQKFTSYGPSCMQQNPEGTYEENLPKAALDLVMQSKVFEAVSPSSEDCLTINVVRPPGTKAGANLPVMLWIFGGGFEVGGTSTFPPAQMITKSIAMGKPIIHVSVNYRVSSWGFLAGDEIKAEGSANAGLKDQRLGMQWVADNIAAFGGDPTKVTIFGESAGSMSVMCHILWNDGDNTYKGKPLFRAGIMQSGAMVPSDAVDGIYGNEIFDLLASNAGCGSASDKLACLRGVSSDTLEDATNNTPGFLAYSSLRLSYLPRPDGVNITDDMYALVREGKYANIPVIIGDQNDEGTFFGTSSLNVTTDAQAREYFKQSFVHASDAEIDTLMTAYPGDITQGSPFDTGILNALTPQFKRISAVLGDLGFTLARRYFLNHYTGGTKYSFLSKQLSGLPVLGTFHSNDIVFQDYLLGSGSLIYNNAFIAFATDLDPNTAGLLVKWPEYTSSSQSGNNLMMINALGLYTGKDNFRTAGYDALFSNPPSFFV.

The first 15 residues, 1–15 (MELALALSLIASVAA), serve as a signal peptide directing secretion. Cys75 and Cys112 are disulfide-bonded. Ser224 functions as the Acyl-ester intermediate in the catalytic mechanism. A disulfide bridge connects residues Cys283 and Cys292. The N-linked (GlcNAc...) asparagine glycan is linked to Asn329. Glu356 acts as the Charge relay system in catalysis. The N-linked (GlcNAc...) asparagine glycan is linked to Asn366. His464 serves as the catalytic Charge relay system.

Belongs to the type-B carboxylesterase/lipase family.

It carries out the reaction a triacylglycerol + H2O = a diacylglycerol + a fatty acid + H(+). This chain is Lipase 1 (LIP1), found in Diutina rugosa (Yeast).